A 75-amino-acid polypeptide reads, in one-letter code: Exodeoxyribonuclease 7 small subunit (75 aa).

This sequence belongs to the XseB family. In terms of assembly, heterooligomer composed of large and small subunits.

The protein resides in the cytoplasm. The catalysed reaction is Exonucleolytic cleavage in either 5'- to 3'- or 3'- to 5'-direction to yield nucleoside 5'-phosphates.. Functionally, bidirectionally degrades single-stranded DNA into large acid-insoluble oligonucleotides, which are then degraded further into small acid-soluble oligonucleotides. This is Exodeoxyribonuclease 7 small subunit from Listeria monocytogenes serotype 4b (strain CLIP80459).